A 105-amino-acid chain; its full sequence is UPF0122 protein OB1530 (105 aa).

The protein belongs to the UPF0122 family.

Functionally, might take part in the signal recognition particle (SRP) pathway. This is inferred from the conservation of its genetic proximity to ftsY/ffh. May be a regulatory protein. The protein is UPF0122 protein OB1530 of Oceanobacillus iheyensis (strain DSM 14371 / CIP 107618 / JCM 11309 / KCTC 3954 / HTE831).